The following is a 185-amino-acid chain: MTNHVVLYEPLMPANTGNIARTCAGTNTILDLIEPLGFQIDNKKMKRAGLDYWDKVDIRMHDDLDAFLKTLGPNDEMYLISKFSSKNYAQVDYTDPNKDYYFVFGKETTGLPETFMREYYDRNLRIPMSDNIRCYNLSNSVAMVLLEALRQQGFPNMETSHHYENDKLKDNYNRPERYERNLGEN.

S-adenosyl-L-methionine-binding residues include isoleucine 80, glycine 105, and isoleucine 126.

This sequence belongs to the class IV-like SAM-binding methyltransferase superfamily. RNA methyltransferase TrmH family. TrmL subfamily.

It localises to the cytoplasm. The catalysed reaction is cytidine(34) in tRNA + S-adenosyl-L-methionine = 2'-O-methylcytidine(34) in tRNA + S-adenosyl-L-homocysteine + H(+). It catalyses the reaction 5-carboxymethylaminomethyluridine(34) in tRNA(Leu) + S-adenosyl-L-methionine = 5-carboxymethylaminomethyl-2'-O-methyluridine(34) in tRNA(Leu) + S-adenosyl-L-homocysteine + H(+). Could methylate the ribose at the nucleotide 34 wobble position in tRNA. The chain is Putative RNA (cytidine(34)-2'-O)-methyltransferase from Lactobacillus gasseri (strain ATCC 33323 / DSM 20243 / BCRC 14619 / CIP 102991 / JCM 1131 / KCTC 3163 / NCIMB 11718 / NCTC 13722 / AM63).